We begin with the raw amino-acid sequence, 344 residues long: tRNA(Ile)-lysidine synthase (344 aa).

Serine 43–serine 48 contributes to the ATP binding site.

This sequence belongs to the tRNA(Ile)-lysidine synthase family.

Its subcellular location is the cytoplasm. It catalyses the reaction cytidine(34) in tRNA(Ile2) + L-lysine + ATP = lysidine(34) in tRNA(Ile2) + AMP + diphosphate + H(+). In terms of biological role, ligates lysine onto the cytidine present at position 34 of the AUA codon-specific tRNA(Ile) that contains the anticodon CAU, in an ATP-dependent manner. Cytidine is converted to lysidine, thus changing the amino acid specificity of the tRNA from methionine to isoleucine. This is tRNA(Ile)-lysidine synthase from Bordetella parapertussis (strain 12822 / ATCC BAA-587 / NCTC 13253).